A 500-amino-acid polypeptide reads, in one-letter code: MEEFQGYFELYRSPQYDFLYPLIFREYIYALAHDRGLNRSILFDNVGYDKKSSLLIIKRLISRMYQQNHFLISVNDSNQNKFLGYNKNLYSQMISEGFAVIVEIPFSLRLVSSLEETESIKSYNLRSIHSIFPFFEDKFPHLNYASDVLIPYPIHLEILVQTLRYCVKDPSSLHLLRLFLHEYYSWNTLITPQKSIFAKSNQRLFLLLYNSYVYEYESILLFLRNQSNHLRLTSSGIFFERIRFYEKIKYPVEEVLFPATLWFFKDPFIQYVSHQGKLILASKDTPLLMNKWKYYLVNFWQCHFYVWSQPGRIHLNQLSKHSFDFLGYLSSIRPNISVVRSQLLENTYLMYNAMKKLNTLFPIIPMIGSLAKVKFCNTLGHPISKSSWADSSDSDIIDRFVRIVGNISHYYSGSSKKKSLYRIKYILRLSCVKTLARKHKSTVRTFLKRLGPKLLDEFFTEEEQIFSLLFPRASSTLKRFYRGPIWYLDILCINDTVNHE.

It belongs to the intron maturase 2 family. MatK subfamily.

It is found in the plastid. The protein resides in the chloroplast. Usually encoded in the trnK tRNA gene intron. Probably assists in splicing its own and other chloroplast group II introns. This is Maturase K from Fragaria vesca (Woodland strawberry).